The sequence spans 150 residues: Large ribosomal subunit protein bL9 (150 aa).

The protein belongs to the bacterial ribosomal protein bL9 family.

Its function is as follows. Binds to the 23S rRNA. The chain is Large ribosomal subunit protein bL9 from Streptococcus pyogenes serotype M6 (strain ATCC BAA-946 / MGAS10394).